The sequence spans 609 residues: NADH-ubiquinone oxidoreductase chain 5 (609 aa).

The next 15 helical transmembrane spans lie at 6–26 (SSILMILILLTTPIIISMTNL), 35–55 (YATSSIKFSFLLSLLPLLLFF), 84–104 (YFSILFLSVALFVTWSIMQFS), 116–138 (RFIKYLMMFLITMLILTSANNLF), 140–160 (LFIGWEGVGIMSFLLIGWWYG), 171–191 (AILYNRVGDIGFILAMTWFCL), 240–260 (TPVSALLHSSTMVVAGIFLMI), 272–292 (IMTAMLCLGAITTLFTAICAL), 300–319 (IVAFSTSSQLGLMMVTLGIN), 330–350 (THAFFKAMLFMCSGSIIHSLN), 365–385 (MPFTSSCLIIGSLALTGMPFL), 409–429 (MITLIATSMTAVYSMRIIYFV), 456–476 (LALGSILAGFLISLNIPPTNI), 481–501 (MPWHLKMTALLITILGFAIAL), and 581–601 (GLIKLYFLSFLITISLIFILH).

Belongs to the complex I subunit 5 family. As to quaternary structure, core subunit of respiratory chain NADH dehydrogenase (Complex I) which is composed of 45 different subunits.

It is found in the mitochondrion inner membrane. The enzyme catalyses a ubiquinone + NADH + 5 H(+)(in) = a ubiquinol + NAD(+) + 4 H(+)(out). Its function is as follows. Core subunit of the mitochondrial membrane respiratory chain NADH dehydrogenase (Complex I) which catalyzes electron transfer from NADH through the respiratory chain, using ubiquinone as an electron acceptor. Essential for the catalytic activity and assembly of complex I. In Rattus norvegicus (Rat), this protein is NADH-ubiquinone oxidoreductase chain 5.